We begin with the raw amino-acid sequence, 218 residues long: MVDKTSDSGRCPAVVLAGGRSSRMGSPKAAVLLGGQTMLDRVIERLSPQVASIAVNLNAHSGGALPSGHPAIADTIPGLPGPLAGVLAAMRHARQVAPGASHVLTVPIDAPFFPGTLAARLQGALIVGDEIAVAWSLGEMHPLFALWPLAIADDLDSWIRTDEKRRVRAFIARHASVAVDFPVVATKAGPLDPFLNVNTPQQLEEAEEWLNRLEDSAI.

Residues 16–18, lysine 28, asparagine 56, aspartate 74, and aspartate 109 contribute to the GTP site; that span reads LAG. Aspartate 109 contributes to the Mg(2+) binding site.

This sequence belongs to the MobA family. Monomer. The cofactor is Mg(2+).

It localises to the cytoplasm. It catalyses the reaction Mo-molybdopterin + GTP + H(+) = Mo-molybdopterin guanine dinucleotide + diphosphate. In terms of biological role, transfers a GMP moiety from GTP to Mo-molybdopterin (Mo-MPT) cofactor (Moco or molybdenum cofactor) to form Mo-molybdopterin guanine dinucleotide (Mo-MGD) cofactor. This is Molybdenum cofactor guanylyltransferase from Sinorhizobium fredii (strain NBRC 101917 / NGR234).